The following is a 332-amino-acid chain: MKQIQTKVDWKKIAFEGIEGKRITKEDALAILEADDTEVLEIMNAAYMIRHHYFGKKVKLNMIINTKSGLCPEDCGYCSQSIVSEAPIDKYAWLTQEKIVEGAHEAVRRKAGTYCIVASGRRPTDKEVNHVIGAVKEIKETTDLKICCCLGFLNEDQAKRLAEAGVHRYNHNLNTHANHYDNICSTHTYDDRVDTVEKVKQAGISPCSGAIFGMGETKEERVEIAFELQRLDADSIPCNFLVSVKGTPFEGRKELTPVECLKILAMMRFVNPSKEIRISGGRELNLRSVQPLGLFAANSIFVGDYLTTVGQESTADWEMIQDLGFEIEECAL.

The Radical SAM core domain occupies 53–282 (YFGKKVKLNM…SKEIRISGGR (230 aa)). [4Fe-4S] cluster contacts are provided by Cys-71, Cys-75, and Cys-78. [2Fe-2S] cluster contacts are provided by Cys-115, Cys-147, Cys-207, and Arg-277.

It belongs to the radical SAM superfamily. Biotin synthase family. As to quaternary structure, homodimer. Requires [4Fe-4S] cluster as cofactor. [2Fe-2S] cluster serves as cofactor.

It catalyses the reaction (4R,5S)-dethiobiotin + (sulfur carrier)-SH + 2 reduced [2Fe-2S]-[ferredoxin] + 2 S-adenosyl-L-methionine = (sulfur carrier)-H + biotin + 2 5'-deoxyadenosine + 2 L-methionine + 2 oxidized [2Fe-2S]-[ferredoxin]. Its pathway is cofactor biosynthesis; biotin biosynthesis; biotin from 7,8-diaminononanoate: step 2/2. Its function is as follows. Catalyzes the conversion of dethiobiotin (DTB) to biotin by the insertion of a sulfur atom into dethiobiotin via a radical-based mechanism. The chain is Biotin synthase from Bacillus cytotoxicus (strain DSM 22905 / CIP 110041 / 391-98 / NVH 391-98).